The primary structure comprises 126 residues: Holo-[acyl-carrier-protein] synthase (126 aa).

D9 and E58 together coordinate Mg(2+).

It belongs to the P-Pant transferase superfamily. AcpS family. Mg(2+) is required as a cofactor.

Its subcellular location is the cytoplasm. The catalysed reaction is apo-[ACP] + CoA = holo-[ACP] + adenosine 3',5'-bisphosphate + H(+). In terms of biological role, transfers the 4'-phosphopantetheine moiety from coenzyme A to a Ser of acyl-carrier-protein. This chain is Holo-[acyl-carrier-protein] synthase, found in Vibrio vulnificus (strain CMCP6).